Consider the following 177-residue polypeptide: ATP synthase subunit delta (177 aa).

The protein belongs to the ATPase delta chain family. As to quaternary structure, F-type ATPases have 2 components, F(1) - the catalytic core - and F(0) - the membrane proton channel. F(1) has five subunits: alpha(3), beta(3), gamma(1), delta(1), epsilon(1). F(0) has three main subunits: a(1), b(2) and c(10-14). The alpha and beta chains form an alternating ring which encloses part of the gamma chain. F(1) is attached to F(0) by a central stalk formed by the gamma and epsilon chains, while a peripheral stalk is formed by the delta and b chains.

It is found in the cell inner membrane. F(1)F(0) ATP synthase produces ATP from ADP in the presence of a proton or sodium gradient. F-type ATPases consist of two structural domains, F(1) containing the extramembraneous catalytic core and F(0) containing the membrane proton channel, linked together by a central stalk and a peripheral stalk. During catalysis, ATP synthesis in the catalytic domain of F(1) is coupled via a rotary mechanism of the central stalk subunits to proton translocation. Functionally, this protein is part of the stalk that links CF(0) to CF(1). It either transmits conformational changes from CF(0) to CF(1) or is implicated in proton conduction. The chain is ATP synthase subunit delta from Vibrio vulnificus (strain CMCP6).